We begin with the raw amino-acid sequence, 273 residues long: Ribosomal RNA small subunit methyltransferase A (273 aa).

Positions 18, 20, 45, 66, 91, and 113 each coordinate S-adenosyl-L-methionine.

It belongs to the class I-like SAM-binding methyltransferase superfamily. rRNA adenine N(6)-methyltransferase family. RsmA subfamily.

It localises to the cytoplasm. It catalyses the reaction adenosine(1518)/adenosine(1519) in 16S rRNA + 4 S-adenosyl-L-methionine = N(6)-dimethyladenosine(1518)/N(6)-dimethyladenosine(1519) in 16S rRNA + 4 S-adenosyl-L-homocysteine + 4 H(+). Its function is as follows. Specifically dimethylates two adjacent adenosines (A1518 and A1519) in the loop of a conserved hairpin near the 3'-end of 16S rRNA in the 30S particle. May play a critical role in biogenesis of 30S subunits. The chain is Ribosomal RNA small subunit methyltransferase A from Salmonella newport (strain SL254).